Consider the following 374-residue polypeptide: Isopentenyl-diphosphate delta-isomerase (374 aa).

13–14 (RK) serves as a coordination point for substrate. FMN-binding positions include 71–73 (GMT), Ser104, and Asn132. 104–106 (SQR) provides a ligand contact to substrate. Substrate is bound at residue Gln171. Glu172 serves as a coordination point for Mg(2+). Residues Lys203, Thr233, 282 to 284 (GMR), and 303 to 304 (AL) contribute to the FMN site.

This sequence belongs to the IPP isomerase type 2 family. Homooctamer. Dimer of tetramers. Requires FMN as cofactor. It depends on NADPH as a cofactor. Mg(2+) serves as cofactor.

The protein resides in the cytoplasm. It catalyses the reaction isopentenyl diphosphate = dimethylallyl diphosphate. Functionally, involved in the biosynthesis of isoprenoids. Catalyzes the 1,3-allylic rearrangement of the homoallylic substrate isopentenyl (IPP) to its allylic isomer, dimethylallyl diphosphate (DMAPP). The protein is Isopentenyl-diphosphate delta-isomerase of Thermococcus onnurineus (strain NA1).